The primary structure comprises 100 residues: Envelope glycoprotein N (100 aa).

An N-terminal signal peptide occupies residues 1–27; the sequence is MLSTRFVTLAILACLLVVLGLARGAGG. Over 28 to 63 the chain is Virion surface; the sequence is DPGVKQRIDVAREEERRDFWHAACSGHGFPITTPST. Residues 64–84 form a helical membrane-spanning segment; that stretch reads AAILFYVSLLAVGVAVACQAY. Over 85–100 the chain is Intravirion; that stretch reads RAVLRIVTLEMLQHLH.

This sequence belongs to the herpesviridae glycoprotein N family. As to quaternary structure, interacts (via N-terminus) with gM (via N-terminus). The gM-gN heterodimer forms the gCII complex.

The protein resides in the virion membrane. It localises to the host membrane. It is found in the host Golgi apparatus. The protein localises to the host trans-Golgi network. In terms of biological role, envelope glycoprotein necessary for proper maturation of gM and modulation of its membrane fusion activity. Also plays a critical role in virion morphogenesis. The chain is Envelope glycoprotein N from Equus caballus (Horse).